We begin with the raw amino-acid sequence, 120 residues long: NADH dehydrogenase [ubiquinone] 1 subunit C2 (120 aa).

Met-1 is subject to N-acetylmethionine. A helical transmembrane segment spans residues 57–76 (GLHRQLLYITSFVFVGYYLL).

It belongs to the complex I NDUFC2 subunit family. As to quaternary structure, complex I is composed of 45 different subunits. Interacts with TMEM242. In terms of processing, there is a minor unacetylated form of subunit B14.5b.

It localises to the mitochondrion inner membrane. Accessory subunit of the mitochondrial membrane respiratory chain NADH dehydrogenase (Complex I), that is believed not to be involved in catalysis but required for the complex assembly. Complex I functions in the transfer of electrons from NADH to the respiratory chain. The immediate electron acceptor for the enzyme is believed to be ubiquinone. The protein is NADH dehydrogenase [ubiquinone] 1 subunit C2 of Bos taurus (Bovine).